The chain runs to 200 residues: Transcription factor FapR (200 aa).

Belongs to the FapR family.

Transcriptional factor involved in regulation of membrane lipid biosynthesis by repressing genes involved in fatty acid and phospholipid metabolism. The protein is Transcription factor FapR of Caldanaerobacter subterraneus subsp. tengcongensis (strain DSM 15242 / JCM 11007 / NBRC 100824 / MB4) (Thermoanaerobacter tengcongensis).